A 342-amino-acid polypeptide reads, in one-letter code: Farnesyl pyrophosphate synthase 2 (342 aa).

Isopentenyl diphosphate is bound by residues Lys47, Arg50, and Gln86. Mg(2+) is bound by residues Asp93 and Asp97. Arg102 is a dimethylallyl diphosphate binding site. Arg103 is a binding site for isopentenyl diphosphate. Dimethylallyl diphosphate contacts are provided by Lys190, Thr191, Gln229, Lys246, and Lys255.

It belongs to the FPP/GGPP synthase family. Mg(2+) serves as cofactor.

The protein resides in the cytoplasm. It catalyses the reaction isopentenyl diphosphate + dimethylallyl diphosphate = (2E)-geranyl diphosphate + diphosphate. It carries out the reaction isopentenyl diphosphate + (2E)-geranyl diphosphate = (2E,6E)-farnesyl diphosphate + diphosphate. The protein operates within isoprenoid biosynthesis; farnesyl diphosphate biosynthesis; farnesyl diphosphate from geranyl diphosphate and isopentenyl diphosphate: step 1/1. It participates in isoprenoid biosynthesis; geranyl diphosphate biosynthesis; geranyl diphosphate from dimethylallyl diphosphate and isopentenyl diphosphate: step 1/1. Catalyzes the sequential condensation of isopentenyl pyrophosphate with the allylic pyrophosphates, dimethylallyl pyrophosphate, and then with the resultant geranylpyrophosphate to the ultimate product farnesyl pyrophosphate. The sequence is that of Farnesyl pyrophosphate synthase 2 (FPS2) from Arabidopsis thaliana (Mouse-ear cress).